A 155-amino-acid polypeptide reads, in one-letter code: RNA pyrophosphohydrolase (155 aa).

The Nudix hydrolase domain maps to 5-147 (RYRPNVAAIV…KRPVYKKVLE (143 aa)). Residues 42 to 63 (GGIDKGESPKEALLRELKEEIG) carry the Nudix box motif.

Belongs to the Nudix hydrolase family. RppH subfamily. A divalent metal cation serves as cofactor.

Functionally, accelerates the degradation of transcripts by removing pyrophosphate from the 5'-end of triphosphorylated RNA, leading to a more labile monophosphorylated state that can stimulate subsequent ribonuclease cleavage. The chain is RNA pyrophosphohydrolase from Nitratiruptor sp. (strain SB155-2).